A 378-amino-acid polypeptide reads, in one-letter code: Alcohol dehydrogenase 1 (378 aa).

Position 48 (cysteine 48) interacts with Zn(2+). 49–53 (HTDVL) is an NAD(+) binding site. Zn(2+)-binding residues include histidine 69, cysteine 99, cysteine 102, cysteine 105, cysteine 113, and cysteine 177. Residues 202 to 207 (GIGTVG), aspartate 226, lysine 231, 274 to 276 (TGV), 297 to 299 (IGA), and 321 to 323 (TAF) contribute to the NAD(+) site.

Belongs to the zinc-containing alcohol dehydrogenase family. Class-IV subfamily. As to quaternary structure, homodimer. Requires Zn(2+) as cofactor. As to expression, present in non-glandular trichome cells.

The protein resides in the nucleus. It localises to the cytoplasm. It is found in the cytosol. It catalyses the reaction (+)-artemisinic alcohol + NAD(+) = (+)-artemisinic aldehyde + NADH + H(+). It functions in the pathway sesquiterpene biosynthesis. In terms of biological role, involved in the biosynthesis of the antimalarial endoperoxide artemisinin. Catalyzes the conversion of artemisinic alcohol into artemisinic aldehyde. The chain is Alcohol dehydrogenase 1 from Artemisia annua (Sweet wormwood).